Consider the following 213-residue polypeptide: MAGAMRKMAVYLGLVEDDGYDGRGFDPDDDFEPELDPEPERDRRRHEPPHQSHQALHPQRDESVRVVQPPMQRDPVPHSASLPAESVRPARIAPVASITQERQSLEKNAPVIMPKVVSEREPYRITTLHPRTYNEARTIGEHFREGTPVIMNLTEMDDTDAKRLVDFAAGLVFGLHGSIERVTQKVFLLSPANVDVTAEDKARIAEGGFFNQS.

The tract at residues 16–63 (EDDGYDGRGFDPDDDFEPELDPEPERDRRRHEPPHQSHQALHPQRDES) is disordered. Residues 27–39 (PDDDFEPELDPEP) show a composition bias toward acidic residues.

Belongs to the SepF family. Homodimer. Interacts with FtsZ.

The protein resides in the cytoplasm. Functionally, cell division protein that is part of the divisome complex and is recruited early to the Z-ring. Probably stimulates Z-ring formation, perhaps through the cross-linking of FtsZ protofilaments. Its function overlaps with FtsA. The polypeptide is Cell division protein SepF 2 (Streptomyces avermitilis (strain ATCC 31267 / DSM 46492 / JCM 5070 / NBRC 14893 / NCIMB 12804 / NRRL 8165 / MA-4680)).